Consider the following 475-residue polypeptide: 3-isopropylmalate dehydratase large subunit (475 aa).

[4Fe-4S] cluster-binding residues include Cys-347, Cys-407, and Cys-410. Residues 418–442 are disordered; the sequence is LAPGERSASTSNRNFEGRQGKGGRT.

It belongs to the aconitase/IPM isomerase family. LeuC type 1 subfamily. Heterodimer of LeuC and LeuD. [4Fe-4S] cluster is required as a cofactor.

The enzyme catalyses (2R,3S)-3-isopropylmalate = (2S)-2-isopropylmalate. It functions in the pathway amino-acid biosynthesis; L-leucine biosynthesis; L-leucine from 3-methyl-2-oxobutanoate: step 2/4. In terms of biological role, catalyzes the isomerization between 2-isopropylmalate and 3-isopropylmalate, via the formation of 2-isopropylmaleate. This chain is 3-isopropylmalate dehydratase large subunit, found in Streptomyces griseus subsp. griseus (strain JCM 4626 / CBS 651.72 / NBRC 13350 / KCC S-0626 / ISP 5235).